The following is a 184-amino-acid chain: Endothelial cell-specific molecule 1 (184 aa).

A signal peptide spans 1-19; that stretch reads MKSVLLLTTLLVPAHLVAA. The IGFBP N-terminal domain maps to 24 to 102; that stretch reads YAVDCPQHCD…GEEFGICKDC (79 aa). 6 cysteine pairs are disulfide-bonded: Cys-28-Cys-51, Cys-32-Cys-53, Cys-37-Cys-54, Cys-43-Cys-57, Cys-65-Cys-83, and Cys-77-Cys-99. Ser-156 carries O-linked (Xyl...) (chondroitin sulfate) serine glycosylation.

As to quaternary structure, monomer. Post-translationally, may contain intrachain disulfide bonds. O-glycosylated; contains chondroitin sulfate and dermatan sulfate. Expressed in lung, on the vascular capillary network within alveolar walls, and also at lower level in kidney.

The protein localises to the secreted. In terms of biological role, involved in angiogenesis; promotes angiogenic sprouting. May have potent implications in lung endothelial cell-leukocyte interactions. This chain is Endothelial cell-specific molecule 1 (ESM1), found in Homo sapiens (Human).